A 200-amino-acid polypeptide reads, in one-letter code: Protein OPI10 homolog (200 aa).

Belongs to the OPI10 family.

It localises to the cytoplasm. The protein localises to the nucleus envelope. The sequence is that of Protein OPI10 homolog from Schizosaccharomyces pombe (strain 972 / ATCC 24843) (Fission yeast).